Reading from the N-terminus, the 419-residue chain is D-amino acid dehydrogenase (419 aa).

Valine 3 to tryptophan 17 provides a ligand contact to FAD.

It belongs to the DadA oxidoreductase family. FAD serves as cofactor.

It catalyses the reaction a D-alpha-amino acid + A + H2O = a 2-oxocarboxylate + AH2 + NH4(+). Its pathway is amino-acid degradation; D-alanine degradation; NH(3) and pyruvate from D-alanine: step 1/1. Functionally, oxidative deamination of D-amino acids. The polypeptide is D-amino acid dehydrogenase (Neisseria gonorrhoeae (strain ATCC 700825 / FA 1090)).